The primary structure comprises 227 residues: ATP synthase F(0) complex subunit a (227 aa).

The next 6 membrane-spanning stretches (helical) occupy residues 14–34 (FLGI…FPTP), 69–89 (WAIL…LGLL), 99–119 (LSLN…IGMF), 139–159 (VPVL…ALGV), 165–185 (LTAG…LLTM), and 190–210 (ALLT…VAMI).

The protein belongs to the ATPase A chain family. In terms of assembly, component of the ATP synthase complex composed at least of ATP5F1A/subunit alpha, ATP5F1B/subunit beta, ATP5MC1/subunit c (homooctomer), MT-ATP6/subunit a, MT-ATP8/subunit 8, ATP5ME/subunit e, ATP5MF/subunit f, ATP5MG/subunit g, ATP5MK/subunit k, ATP5MJ/subunit j, ATP5F1C/subunit gamma, ATP5F1D/subunit delta, ATP5F1E/subunit epsilon, ATP5PF/subunit F6, ATP5PB/subunit b, ATP5PD/subunit d, ATP5PO/subunit OSCP. ATP synthase complex consists of a soluble F(1) head domain (subunits alpha(3) and beta(3)) - the catalytic core - and a membrane F(0) domain - the membrane proton channel (subunits c, a, 8, e, f, g, k and j). These two domains are linked by a central stalk (subunits gamma, delta, and epsilon) rotating inside the F1 region and a stationary peripheral stalk (subunits F6, b, d, and OSCP). Interacts with DNAJC30; interaction is direct.

The protein localises to the mitochondrion inner membrane. The catalysed reaction is H(+)(in) = H(+)(out). Functionally, subunit a, of the mitochondrial membrane ATP synthase complex (F(1)F(0) ATP synthase or Complex V) that produces ATP from ADP in the presence of a proton gradient across the membrane which is generated by electron transport complexes of the respiratory chain. ATP synthase complex consist of a soluble F(1) head domain - the catalytic core - and a membrane F(1) domain - the membrane proton channel. These two domains are linked by a central stalk rotating inside the F(1) region and a stationary peripheral stalk. During catalysis, ATP synthesis in the catalytic domain of F(1) is coupled via a rotary mechanism of the central stalk subunits to proton translocation. With the subunit c (ATP5MC1), forms the proton-conducting channel in the F(0) domain, that contains two crucial half-channels (inlet and outlet) that facilitate proton movement from the mitochondrial intermembrane space (IMS) into the matrix. Protons are taken up via the inlet half-channel and released through the outlet half-channel, following a Grotthuss mechanism. In Scyliorhinus canicula (Small-spotted catshark), this protein is ATP synthase F(0) complex subunit a.